Consider the following 343-residue polypeptide: Fructose-1,6-bisphosphatase class 1 (343 aa).

4 residues coordinate Mg(2+): Glu-99, Asp-121, Leu-123, and Asp-124. Substrate contacts are provided by residues 124-127 (DGSS), Asn-218, Tyr-250, and Lys-283. Glu-289 contacts Mg(2+).

It belongs to the FBPase class 1 family. In terms of assembly, homotetramer. Requires Mg(2+) as cofactor.

The protein localises to the cytoplasm. It catalyses the reaction beta-D-fructose 1,6-bisphosphate + H2O = beta-D-fructose 6-phosphate + phosphate. It participates in carbohydrate biosynthesis; gluconeogenesis. This chain is Fructose-1,6-bisphosphatase class 1, found in Leptospira biflexa serovar Patoc (strain Patoc 1 / Ames).